A 132-amino-acid chain; its full sequence is Glycine cleavage system H protein (132 aa).

Residues 27–109 (FATIGISAFA…FDFGWILKVK (83 aa)) enclose the Lipoyl-binding domain. N6-lipoyllysine is present on Lys-68.

The protein belongs to the GcvH family. In terms of assembly, the glycine cleavage system is composed of four proteins: P, T, L and H. The cofactor is (R)-lipoate.

Functionally, the glycine cleavage system catalyzes the degradation of glycine. The H protein shuttles the methylamine group of glycine from the P protein to the T protein. The polypeptide is Glycine cleavage system H protein (Rhodopirellula baltica (strain DSM 10527 / NCIMB 13988 / SH1)).